Consider the following 1306-residue polypeptide: Clustered mitochondria protein homolog (1306 aa).

The segment covering M1–A11 has biased composition (low complexity). A disordered region spans residues M1–G47. A compositionally biased stretch (polar residues) spans S12–T33. Residues D336–M580 enclose the Clu domain. 2 disordered regions span residues E630 to I689 and K912 to A956. The segment covering E656–I689 has biased composition (basic and acidic residues). 3 TPR repeats span residues A1032–T1065, L1074–V1107, and I1116–V1149. The segment at F1275–K1306 is disordered. The span at N1285–G1298 shows a compositional bias: basic residues.

Belongs to the CLU family. As to quaternary structure, may associate with the eukaryotic translation initiation factor 3 (eIF-3) complex.

The protein localises to the cytoplasm. In terms of biological role, mRNA-binding protein involved in proper cytoplasmic distribution of mitochondria. This chain is Clustered mitochondria protein homolog, found in Botryotinia fuckeliana (strain B05.10) (Noble rot fungus).